The chain runs to 461 residues: Ubiquinone hydroxylase UbiM (461 aa).

The protein belongs to the UbiH/COQ6 family. It depends on FAD as a cofactor.

The catalysed reaction is a 2-(all-trans-polyprenyl)phenol + NADPH + O2 + H(+) = a 3-(all-trans-polyprenyl)benzene-1,2-diol + NADP(+) + H2O. It carries out the reaction a 5-methoxy-2-methyl-3-(all-trans-polyprenyl)benzene-1,4-diol + AH2 + O2 = a 3-demethylubiquinol + A + H2O. It participates in cofactor biosynthesis; ubiquinone biosynthesis. Functionally, catalyzes the hydroxylation of three positions of the aromatic ring during ubiquinone biosynthesis. The polypeptide is Ubiquinone hydroxylase UbiM (Neisseria meningitidis serogroup C / serotype 2a (strain ATCC 700532 / DSM 15464 / FAM18)).